A 352-amino-acid chain; its full sequence is Transcription factor MYB86 (352 aa).

HTH myb-type domains follow at residues 9–61 and 62–116; these read KQKL…INYL and RPDL…KKKL. 2 DNA-binding regions (H-T-H motif) span residues 37 to 61 and 89 to 112; these read WSSV…INYL and WSQI…NSCL.

Expressed in stems, flowers and seeds. Weakly expressed in leaves and roots.

The protein resides in the nucleus. Its function is as follows. Probable transcription factor. The sequence is that of Transcription factor MYB86 (MYB86) from Arabidopsis thaliana (Mouse-ear cress).